The primary structure comprises 429 residues: GDP-fucose protein O-fucosyltransferase 2 (429 aa).

The first 21 residues, 1–21 (MATLSFVFLLLGAVSWPPASA), serve as a signal peptide directing secretion. 53–57 (PEGFN) serves as a coordination point for GDP-beta-L-fucose. Glu54 functions as the Proton acceptor in the catalytic mechanism. Cysteines 161 and 192 form a disulfide. Asn189, Asn209, and Asn259 each carry an N-linked (GlcNAc...) asparagine glycan. Residues 292–294 (HLR), Asp371, and 388–389 (TF) each bind GDP-beta-L-fucose. The cysteines at positions 412 and 419 are disulfide-linked.

The protein belongs to the glycosyltransferase 68 family. Isoform A is expressed in fetal liver and peripheral blood lymphocytes. Isoform B is expressed in spleen, lung, testis, bone marrow, thymus, pancreas, prostate, fetal brain, fetal liver and fetal kidney. Isoform C is expressed in brain, heart, spleen, liver, lung, stomach, testis, placenta, skin, thymus, pancreas, mammary gland, prostate, fetal brain, fetal liver and fetal heart.

It localises to the endoplasmic reticulum. The protein resides in the golgi apparatus. It carries out the reaction L-seryl-[protein] + GDP-beta-L-fucose = 3-O-(alpha-L-fucosyl)-L-seryl-[protein] + GDP + H(+). The catalysed reaction is L-threonyl-[protein] + GDP-beta-L-fucose = 3-O-(alpha-L-fucosyl)-L-threonyl-[protein] + GDP + H(+). The protein operates within protein modification; protein glycosylation. Its activity is regulated as follows. Inhibited by EDTA and by Zn(2+). Its function is as follows. Catalyzes the reaction that attaches fucose through an O-glycosidic linkage to a conserved serine or threonine residue in the consensus sequence C1-X-X-S/T-C2 of thrombospondin type I repeats (TSRs) where C1 and C2 are the first and second cysteines of the repeat, respectively. O-fucosylates members of several protein families including the ADAMTS, the thrombospondin (TSP) and spondin families. Required for the proper secretion of ADAMTS family members such as ADAMTSL1 and ADAMTS13. The O-fucosylation of TSRs is also required for restricting epithelial to mesenchymal transition (EMT), maintaining the correct patterning of mesoderm and localization of the definite endoderm. The sequence is that of GDP-fucose protein O-fucosyltransferase 2 (POFUT2) from Homo sapiens (Human).